We begin with the raw amino-acid sequence, 188 residues long: dCTP deaminase (188 aa).

Residues 111–116, 135–137, Gln156, Tyr170, and Gln180 contribute to the dCTP site; these read KSTYAR and TLE. Glu137 serves as the catalytic Proton donor/acceptor.

It belongs to the dCTP deaminase family. Homotrimer.

It carries out the reaction dCTP + H2O + H(+) = dUTP + NH4(+). Its pathway is pyrimidine metabolism; dUMP biosynthesis; dUMP from dCTP (dUTP route): step 1/2. Its function is as follows. Catalyzes the deamination of dCTP to dUTP. This Herminiimonas arsenicoxydans protein is dCTP deaminase.